The following is a 144-amino-acid chain: MLQPKKTKFRRQQKGRMKGEAQRGNQLAFGSFGIKSLENKWITGRQIEAARIAVTRYMQRQGQVWVRIFPDKPITKKPAEVRMGKGKGNPEGFVAPVTPGRLIFEIEGVPFDIAKEALRLAAQKLPVTTKFVVRRDYDMQNQNA.

The segment covering 1 to 16 (MLQPKKTKFRRQQKGR) has biased composition (basic residues). Positions 1–22 (MLQPKKTKFRRQQKGRMKGEAQ) are disordered.

Belongs to the universal ribosomal protein uL16 family. In terms of assembly, part of the 50S ribosomal subunit.

Its function is as follows. Binds 23S rRNA and is also seen to make contacts with the A and possibly P site tRNAs. The protein is Large ribosomal subunit protein uL16 of Parabacteroides distasonis (strain ATCC 8503 / DSM 20701 / CIP 104284 / JCM 5825 / NCTC 11152).